A 734-amino-acid chain; its full sequence is Tripartite terminase subunit 3 (734 aa).

The Nuclear localization signal motif lies at 183–189 (PKKRAKV). The Walker A motif motif lies at 258 to 265 (VPRRHGKT). The Walker B motif signature appears at 352–357 (LLFVDE). The For ATPase activity role is filled by E357. Catalysis depends on for nuclease activity residues D509, E581, and D706.

This sequence belongs to the herpesviridae TRM3 protein family. Interacts with the terminase subunits TRM1 and TRM2. Interacts with portal protein.

It is found in the host nucleus. In terms of biological role, component of the molecular motor that translocates viral genomic DNA in empty capsid during DNA packaging. Forms a tripartite terminase complex together with TRM1 and TRM2 in the host cytoplasm. Once the complex reaches the host nucleus, it interacts with the capsid portal vertex. This portal forms a ring in which genomic DNA is translocated into the capsid. TRM3 carries an RNase H-like nuclease activity that plays an important role for the cleavage of concatemeric viral DNA into unit length genomes. In Human herpesvirus 2 (strain HG52) (HHV-2), this protein is Tripartite terminase subunit 3.